Here is an 84-residue protein sequence, read N- to C-terminus: UPF0153 protein YeiW (84 aa).

Belongs to the UPF0153 family.

The chain is UPF0153 protein YeiW (yeiW) from Escherichia coli (strain K12).